Reading from the N-terminus, the 122-residue chain is Large ribosomal subunit protein uL14c (122 aa).

The protein belongs to the universal ribosomal protein uL14 family. As to quaternary structure, part of the 50S ribosomal subunit.

It localises to the plastid. The protein resides in the chloroplast. In terms of biological role, binds to 23S rRNA. In Manihot esculenta (Cassava), this protein is Large ribosomal subunit protein uL14c.